A 267-amino-acid polypeptide reads, in one-letter code: Myeloid leukemia factor 1 (267 aa).

4 positions are modified to phosphoserine: serine 6, serine 8, serine 32, and serine 34. The disordered stretch occupies residues 39–67; it reads RDLLSISDGRGRTHNRRERDDGEDSLTHA. Positions 50–125 are interaction with COPS3; the sequence is RTHNRRERDD…VGDEPPKVFQ (76 aa).

This sequence belongs to the MLF family. As to quaternary structure, interacts with CENPU. Also interacts with NRBP1/MADM, YWHAZ/14-3-3-zeta and HNRPUL2/MANP. NRBP1 recruits a serine kinase which phosphorylates both itself and MLF1. Phosphorylated MLF1 then binds to YWHAZ and is retained in the cytoplasm. Retained in the nucleus by binding to HNRPUL2. Binds to COPS3/CSN3 which is required for suppression of COP1 and activation of p53. Post-translationally, phosphorylation is required for binding to YWHAZ. As to expression, highly expressed in skeletal muscle, heart, testis. Also found in lung, but not in spleen, thymus, bone marrow, liver and kidney.

The protein localises to the cytoplasm. It localises to the nucleus. Its subcellular location is the cell projection. The protein resides in the cilium. It is found in the cytoskeleton. The protein localises to the cilium basal body. Involved in lineage commitment of primary hemopoietic progenitors by restricting erythroid formation and enhancing myeloid formation. Interferes with erythropoietin-induced erythroid terminal differentiation by preventing cells from exiting the cell cycle through suppression of CDKN1B/p27Kip1 levels. Suppresses COP1 activity via CSN3 which activates p53 and induces cell cycle arrest. Binds DNA and affects the expression of a number of genes so may function as a transcription factor in the nucleus. The sequence is that of Myeloid leukemia factor 1 (Mlf1) from Mus musculus (Mouse).